The chain runs to 649 residues: Alpha-amylase (649 aa).

E124 functions as the Nucleophile in the catalytic mechanism. The active-site Proton donor is the D215.

Belongs to the glycosyl hydrolase 57 family. As to quaternary structure, homodimer.

It catalyses the reaction Endohydrolysis of (1-&gt;4)-alpha-D-glucosidic linkages in polysaccharides containing three or more (1-&gt;4)-alpha-linked D-glucose units.. In terms of biological role, displays a broad range of substrate specificity, with the capacity to hydrolyze carbohydrates as simple as maltotriose. This Pyrococcus furiosus (strain ATCC 43587 / DSM 3638 / JCM 8422 / Vc1) protein is Alpha-amylase (amyA).